A 363-amino-acid chain; its full sequence is Nucleoporin SEH1 (363 aa).

WD repeat units lie at residues 15–54 (AHRDLIHCVSFDPHGRRMATCASDMTMAIWDRKPDGNWRR), 60–101 (CHGG…SEKD), 108–149 (QWIR…RIYE), 158–206 (RWNL…VIYE), 223–264 (DLPC…SAIL), and 287–326 (GDHRKAWRLRYNLMGSVISSTSLDGTLRSWKSLFVNQWVK).

This sequence belongs to the WD repeat SEC13 family. In terms of assembly, component of the nuclear pore complex (NPC). Probably part of the GATOR complex.

It is found in the nucleus. The protein resides in the nuclear pore complex. It localises to the lysosome membrane. The protein localises to the nucleus envelope. Its function is as follows. Probable component of the nuclear pore complex (NPC) which is involved in the trafficking of macromolecules between the cytoplasm and nucleus. As a component of the GATOR complex may function in the amino acid-sensing branch of the TORC1 signaling pathway. The sequence is that of Nucleoporin SEH1 from Caenorhabditis elegans.